Reading from the N-terminus, the 434-residue chain is Urokinase-type plasminogen activator (434 aa).

The N-terminal stretch at 1-20 is a signal peptide; it reads MKLIIFLTVTLCTLVTGLDS. An EGF-like domain is found at 36–72; sequence QHRECQCLNGGTCITYRFFSQIKRCLCPEGYGGLHCE. 12 disulfides stabilise this stretch: Cys-40–Cys-48, Cys-42–Cys-60, Cys-62–Cys-71, Cys-79–Cys-158, Cys-96–Cys-139, Cys-128–Cys-152, Cys-162–Cys-296, Cys-202–Cys-218, Cys-210–Cys-285, Cys-310–Cys-379, Cys-342–Cys-358, and Cys-369–Cys-397. The region spanning 79-158 is the Kringle domain; sequence CYSGNGEDYR…ETPCSTIEKC (80 aa). The segment at 159–172 is connecting peptide; sequence ERTCGQRSFSKYFK. The region spanning 173–421 is the Peptidase S1 domain; the sequence is IVGGSQAEVE…YLNWIDSNMN (249 aa). Residue His-217 is the Charge relay system of the active site. Residue Asn-228 is glycosylated (N-linked (GlcNAc...) asparagine). The active-site Charge relay system is the Asp-272. Ser-373 acts as the Charge relay system in catalysis.

This sequence belongs to the peptidase S1 family.

The protein localises to the secreted. It catalyses the reaction Specific cleavage of Arg-|-Val bond in plasminogen to form plasmin.. Specifically cleaves the zymogen plasminogen to form the active enzyme plasmin. The sequence is that of Urokinase-type plasminogen activator (PLAU) from Gallus gallus (Chicken).